We begin with the raw amino-acid sequence, 781 residues long: MLARAPPPYFNFPARNNTICNRNEIVRLFRNGGGVVARGAGFTRRPLETSSSYDDSTDDGFVIISAADKENEFAPPPSSDLLSSIPSESARRNGSRSRGLTASFGRLKAQKVKALVGKVTQKKQHMSHNEEEDEDDASDENYSADEGFGSSSILDLMRKKLAMKAIPRSGKSAERNEVKRASKVRESRESRRDLDRLEGDDEDVDEVSNPDRFTDNQRAGSRSSYSKGGYAANSRGKGDRLSVARDLDSFEGHGRAIDEVSNPRKFNDNERAESRSSYSRDSSANSRGREDRRFVAKELDTFQGRDKAYDEVYNPRRFTDNERGLRGGSHSKGSDTNSRGWGDRRSVVYTRDMDDWRERNKTKDTRETGFFSRKTFAEIGCSEDMMKALKEQNFDRPAHIQAMAFSPVIDGKSCIIADQSGSGKTLAYLVPVIQRLREEELQGHSKSSPGCPRVIVLVPTAELASQVLANCRSISKSGVPFRSMVVTGGFRQRTQLENLEQGVDVLIATPGRFTYLMNEGILGLSNLRCAILDEVDILFGDDEFEAALQNLINSSPVTAQYLFVTATLPLEIYNKLVEVFPDCEVVMGPRVHRVSNALEEFLVDCSGDDNAEKTPETAFQNKKTALLQIMEENPVSKTIIFCNKIETCRKVENIFKRVDRKERQLHVLPFHAALSQESRLTNMQEFTSSQPEENSLFLVCTDRASRGIDFSGVDHVVLFDFPRDPSEYVRRVGRTARGARGKGKAFIFVVGKQVGLARRIIERNEKGHPVHDVPNAYEFTT.

Disordered regions lie at residues 72 to 103, 117 to 148, 166 to 240, 254 to 292, and 313 to 342; these read EFAP…LTAS, GKVT…DEGF, IPRS…KGDR, GRAI…REDR, and YNPR…RGWG. Residues 79-88 are compositionally biased toward low complexity; the sequence is SDLLSSIPSE. The segment covering 130 to 143 has biased composition (acidic residues); it reads EEEDEDDASDENYS. The span at 171-197 shows a compositional bias: basic and acidic residues; that stretch reads KSAERNEVKRASKVRESRESRRDLDRL. A compositionally biased stretch (acidic residues) spans 198 to 208; sequence EGDDEDVDEVS. A compositionally biased stretch (polar residues) spans 216 to 226; it reads NQRAGSRSSYS. The span at 254–274 shows a compositional bias: basic and acidic residues; the sequence is GRAIDEVSNPRKFNDNERAES. Residues 275–286 show a composition bias toward low complexity; that stretch reads RSSYSRDSSANS. Residues 313–325 show a composition bias toward basic and acidic residues; sequence YNPRRFTDNERGL. The Q motif motif lies at 374 to 402; it reads KTFAEIGCSEDMMKALKEQNFDRPAHIQA. The 182-residue stretch at 405 to 586 folds into the Helicase ATP-binding domain; the sequence is FSPVIDGKSC…VEVFPDCEVV (182 aa). 418-425 provides a ligand contact to ATP; the sequence is DQSGSGKT. The DEAD box motif lies at 533–536; sequence DEVD. Residues 621 to 781 enclose the Helicase C-terminal domain; the sequence is NKKTALLQIM…DVPNAYEFTT (161 aa).

The protein belongs to the DEAD box helicase family.

The enzyme catalyses ATP + H2O = ADP + phosphate + H(+). Probably involved in resistance to biotic and abiotic stresses. This is DEAD-box ATP-dependent RNA helicase 50 (RH50) from Arabidopsis thaliana (Mouse-ear cress).